The chain runs to 88 residues: MADVLVSFKLLPSDSDVDTSVMESEVKEKLNGVCKINNIEEKDIGFGLKYIHLEVIVEDKEGEVDRIEKVLSMVKGVGEINTENVSLI.

This sequence belongs to the EF-1-beta/EF-1-delta family.

Its function is as follows. Promotes the exchange of GDP for GTP in EF-1-alpha/GDP, thus allowing the regeneration of EF-1-alpha/GTP that could then be used to form the ternary complex EF-1-alpha/GTP/AAtRNA. The polypeptide is Elongation factor 1-beta (ef1b) (Thermoplasma volcanium (strain ATCC 51530 / DSM 4299 / JCM 9571 / NBRC 15438 / GSS1)).